A 218-amino-acid chain; its full sequence is Pyridoxine/pyridoxamine 5'-phosphate oxidase (218 aa).

Substrate contacts are provided by residues 14 to 17 (RREY) and K72. Residues 67–72 (RIVLLK), 82–83 (YT), R88, K89, and Q111 each bind FMN. Substrate contacts are provided by Y129, R133, and S137. Residues 146–147 (QS) and W191 contribute to the FMN site. 197–199 (RLH) serves as a coordination point for substrate. Residue R201 coordinates FMN.

Belongs to the pyridoxamine 5'-phosphate oxidase family. Homodimer. It depends on FMN as a cofactor.

It carries out the reaction pyridoxamine 5'-phosphate + O2 + H2O = pyridoxal 5'-phosphate + H2O2 + NH4(+). It catalyses the reaction pyridoxine 5'-phosphate + O2 = pyridoxal 5'-phosphate + H2O2. It functions in the pathway cofactor metabolism; pyridoxal 5'-phosphate salvage; pyridoxal 5'-phosphate from pyridoxamine 5'-phosphate: step 1/1. Its pathway is cofactor metabolism; pyridoxal 5'-phosphate salvage; pyridoxal 5'-phosphate from pyridoxine 5'-phosphate: step 1/1. In terms of biological role, catalyzes the oxidation of either pyridoxine 5'-phosphate (PNP) or pyridoxamine 5'-phosphate (PMP) into pyridoxal 5'-phosphate (PLP). The sequence is that of Pyridoxine/pyridoxamine 5'-phosphate oxidase from Salmonella paratyphi B (strain ATCC BAA-1250 / SPB7).